The following is a 1873-amino-acid chain: Girdin (1873 aa).

A Calponin-homology (CH) domain is found at 12-132; that stretch reads QFMTSPLVTW…KLLLLLLGCA (121 aa). A coiled-coil region spans residues 196–425; it reads HLRRLIDERD…EMAQKQSMDE (230 aa). Phosphoserine is present on residues Ser-233, Ser-237, and Ser-449. Coiled coils occupy residues 458-1232 and 1268-1385; these read TSSK…ESKN and HKNL…KFYD. Disordered regions lie at residues 816-841 and 1013-1034; these read ENKS…NKRL and EERM…GRES. A Phosphoserine modification is found at Ser-1020. The residue at position 1387 (Ser-1387) is a Phosphoserine. Residues 1390 to 1408 form a phosphoinositide-binding region; sequence RRRGNWITLKMRKLIKSKK. The segment covering 1407-1416 has biased composition (basic and acidic residues); that stretch reads KKDINRERQK. Disordered stretches follow at residues 1407-1459, 1560-1602, and 1616-1643; these read KKDI…LGTK, TTSF…SNNN, and QSRP…GSSP. Position 1417 is a phosphoserine; by PKB/AKT1 (Ser-1417). Composition is skewed to polar residues over residues 1417 to 1430, 1445 to 1459, 1560 to 1579, and 1616 to 1626; these read SLTL…SSEG, VGSN…LGTK, TTSF…STGS, and QSRPQSHSSGD. Position 1421 is a phosphothreonine (Thr-1421). A GBA motif is present at residues 1674-1704; sequence KAGSPGSEVVTLQQFLEESNKLTSIQLKSSS. A phosphoserine mark is found at Ser-1677, Ser-1692, and Ser-1719. Positions 1715–1825 are SH2-like; required for interaction with growth factor receptors; sequence SLSVSSDFLG…GTTRRTSIHD (111 aa). Positions 1738–1873 are disordered; sequence SGKTPGDFYD…KSRSREQQSS (136 aa). The span at 1745 to 1755 shows a compositional bias: basic and acidic residues; sequence FYDRRTTKPEF. Position 1767 is a phosphotyrosine (Tyr-1767). Composition is skewed to polar residues over residues 1768 to 1781, 1789 to 1801, and 1809 to 1820; these read TISS…STQG, TSVS…SNPY, and SVISTAEGTTRR. A Phosphotyrosine modification is found at Tyr-1801. Phosphoserine occurs at positions 1822 and 1839. Basic and acidic residues predominate over residues 1822–1832; the sequence is SIHDFLSKDSR. Residues 1839 to 1852 are compositionally biased toward low complexity; sequence SSPPTAGSSSTTAS. Positions 1858–1873 are enriched in basic and acidic residues; it reads QESRNSKSRSREQQSS.

This sequence belongs to the CCDC88 family. In terms of assembly, homodimer. Interacts (via GBA motif) with guanine nucleotide-binding protein G(i) alpha subunits GNAI1, GNAI2 and GNAI3. Also interacts (via GNA motif) with guanine nucleotide-binding protein G(s) alpha subunit GNAS. Interaction with G(i) alpha subunits occurs before interaction with GNAS and is regulated by phosphorylation; phosphorylation at Ser-1677 enhances binding to G(i) alpha subunits while phosphorylation at Ser-1692 abolishes G(i) alpha subunit binding, promoting binding to GNAS. Interacts (via C-terminal SH2-like region) with growth factor receptors EGFR, INSR and KDR/VEGFR2 (via their autophosphorylated cytoplasmic tails). Forms a complex with EGFR and GNAI3 which leads to enhanced EGFR signaling and triggering of cell migration; ligand stimulation is required for recruitment of GNAI3 to the complex. Interacts (tyrosine-phosphorylated form) with phosphatidylinositol 3-kinase (PI3K) regulatory subunit PIK3R1/p85a (via SH2 domains); the interaction enables recruitment of PIK3R1 to the EGFR receptor, enhancing PI3K activity and cell migration. Interacts with serine/threonine-protein kinase PRKCQ; the interaction leads to phosphorylation of CCDC88A and inhibition of its guanine nucleotide exchange factor activity. Interacts (via C-terminus) with DISC1; the interaction is direct. Interacts with AKT proteins; the interaction is inhibited in the presence of DISC1. Interacts with AKT1/PKB (via C-terminus). The non-phosphorylated form interacts with phosphatidylinositol 4-phosphate [Pi(4)P] and weakly with phosphatidylinositol 3-phosphate [Pi(3)P]. Interacts with microtubules. Interacts with actin. Phosphorylation is induced by epidermal growth factor (EGF) in a phosphoinositide 3-kinase (PI3K)-dependent manner. Phosphorylation by AKT1/PKB is necessary for the delocalization from the cell membrane and for cell migration. Phosphorylated on tyrosine residues which promotes binding to phosphatidylinositol 3-kinase (PI3K) regulatory subunit PIK3R1/p85a and enhances PI3K activity. Tyrosine-phosphorylated by both receptor and non-receptor tyrosine kinases in vitro. Tyrosine phosphorylation is required for AKT1-dependent phosphorylation of Ser-1417. Phosphorylation at Ser-1692 by PRKCQ disrupts interaction with GNAI3 and inhibits guanine nucleotide exchange factor activity. In terms of tissue distribution, expressed in the dentate gyrus, pyramidal cell layer of hippocampal regions CA1 and CA3 at postnatal 15. Expressed highly in neurons. Weakly in neuron progenitors (at protein level). Expressed in the dentate granule cell layer of the hippocampus. Expressed highly in the adult testis, moderately in the brain and at a low level in the spleen, lungs and fat.

Its subcellular location is the cell membrane. It localises to the cytoplasm. The protein resides in the cytosol. The protein localises to the cytoplasmic vesicle. It is found in the cell projection. Its subcellular location is the lamellipodium. It localises to the cytoskeleton. The protein resides in the cilium basal body. The protein localises to the microtubule organizing center. It is found in the centrosome. Its subcellular location is the centriole. Functionally, bifunctional modulator of guanine nucleotide-binding proteins (G proteins). Acts as a non-receptor guanine nucleotide exchange factor which binds to and activates guanine nucleotide-binding protein G(i) alpha subunits. Also acts as a guanine nucleotide dissociation inhibitor for guanine nucleotide-binding protein G(s) subunit alpha GNAS. Essential for cell migration. Interacts in complex with G(i) alpha subunits with the EGFR receptor, retaining EGFR at the cell membrane following ligand stimulation and promoting EGFR signaling which triggers cell migration. Binding to Gi-alpha subunits displaces the beta and gamma subunits from the heterotrimeric G-protein complex which enhances phosphoinositide 3-kinase (PI3K)-dependent phosphorylation and kinase activity of AKT1/PKB. Phosphorylation of AKT1/PKB induces the phosphorylation of downstream effectors GSK3 and FOXO1/FKHR, and regulates DNA replication and cell proliferation. Binds in its tyrosine-phosphorylated form to the phosphatidylinositol 3-kinase (PI3K) regulatory subunit PIK3R1 which enables recruitment of PIK3R1 to the EGFR receptor, enhancing PI3K activity and cell migration. Plays a role as a key modulator of the AKT-mTOR signaling pathway, controlling the tempo of the process of newborn neuron integration during adult neurogenesis, including correct neuron positioning, dendritic development and synapse formation. Inhibition of G(s) subunit alpha GNAS leads to reduced cellular levels of cAMP and suppression of cell proliferation. Essential for the integrity of the actin cytoskeleton. Required for formation of actin stress fibers and lamellipodia. May be involved in membrane sorting in the early endosome. Plays a role in ciliogenesis and cilium morphology and positioning and this may partly be through regulation of the localization of scaffolding protein CROCC/Rootletin. The sequence is that of Girdin (Ccdc88a) from Mus musculus (Mouse).